Here is a 229-residue protein sequence, read N- to C-terminus: GTP cyclohydrolase 1 (229 aa).

Positions 1 to 26 (MDAKIKPIRGTNPAEGRPEFQPAELE) are disordered. 3 residues coordinate Zn(2+): cysteine 118, histidine 121, and cysteine 189.

Belongs to the GTP cyclohydrolase I family. As to quaternary structure, toroid-shaped homodecamer, composed of two pentamers of five dimers.

The catalysed reaction is GTP + H2O = 7,8-dihydroneopterin 3'-triphosphate + formate + H(+). Its pathway is cofactor biosynthesis; 7,8-dihydroneopterin triphosphate biosynthesis; 7,8-dihydroneopterin triphosphate from GTP: step 1/1. This chain is GTP cyclohydrolase 1, found in Rhodopseudomonas palustris (strain ATCC BAA-98 / CGA009).